Reading from the N-terminus, the 381-residue chain is Prolargin (381 aa).

The signal sequence occupies residues 1–21 (MRSSLCWLLTLLLILATAAQG). The interval 19 to 65 (AQGQPTRRPRPRPRPRPRPRLRPTPSFPQPDEPTEPTDLPPPLPPGP) is disordered. Over residues 25–39 (RRPRPRPRPRPRPRL) the composition is skewed to basic residues. Positions 56–65 (DLPPPLPPGP) are enriched in pro residues. 12 LRR repeats span residues 94 to 113 (RKVP…NNFI), 114 to 137 (TELP…NNRI), 138 to 161 (RKVD…KNQL), 162 to 182 (EEVP…QNQI), 183 to 206 (SRIP…HNKL), 207 to 232 (SDGV…HNTL), 233 to 253 (RKMP…SNRI), 254 to 277 (EAIP…YNQL), 278 to 302 (SDRG…HNRI), 303 to 322 (SSVP…NNSI), 323 to 361 (EKIN…GNYL), and 362 to 381 (KPPI…SVVI). Residue N123 is glycosylated (N-linked (GlcNAc...) asparagine). N-linked (GlcNAc...) asparagine glycans are attached at residues N288, N319, and N326. C331 and C372 are joined by a disulfide.

The protein belongs to the small leucine-rich proteoglycan (SLRP) family. SLRP class II subfamily. In terms of assembly, binds the basement membrane heparan sulfate proteoglycan perlecan and triple helical collagens type I and type II. Post-translationally, glycosylated; contains heparan sulfate.

Its subcellular location is the secreted. It localises to the extracellular space. The protein localises to the extracellular matrix. Its function is as follows. May anchor basement membranes to the underlying connective tissue. The polypeptide is Prolargin (PRELP) (Bos taurus (Bovine)).